A 334-amino-acid chain; its full sequence is Cytoskeleton protein RodZ (334 aa).

Topologically, residues 1–111 are cytoplasmic; that stretch reads MNTEATHDQN…LGKRRKKRDG (111 aa). One can recognise an HTH cro/C1-type domain in the interval 19–71; it reads LRNAREQLGLSQQAVAERLCLKVSTVRDIEEDKAPSDLASTFLRGYIRSYARL. The H-T-H motif DNA-binding region spans 30-49; it reads QQAVAERLCLKVSTVRDIEE. A helical; Signal-anchor for type II membrane protein membrane pass occupies residues 112 to 132; sequence WLMSFTWLVLFVVVGLTGAWW. The Periplasmic portion of the chain corresponds to 133-334; it reads WQNHKAQQEE…TLNAEPTPAQ (202 aa). Disordered regions lie at residues 155-207 and 221-241; these read NADK…ATQN and ATSAAPAATETPSALPTSQAG. The span at 176–207 shows a compositional bias: low complexity; it reads TTPAQTAPAPATPVDSTAATQTPAATATATQN.

The protein belongs to the RodZ family.

The protein resides in the cell inner membrane. Its function is as follows. Cytoskeletal protein that is involved in cell-shape control through regulation of the length of the long axis. This is Cytoskeleton protein RodZ from Salmonella schwarzengrund (strain CVM19633).